Here is a 379-residue protein sequence, read N- to C-terminus: Origin of replication complex subunit 2 (379 aa).

The segment at 1–25 is disordered; sequence MALRGGHAAAAAGVSSGSEDDDEEA. Residues 8–17 are compositionally biased toward low complexity; it reads AAAAAGVSSG.

The protein belongs to the ORC2 family. In terms of assembly, component of the origin recognition complex (ORC) composed of at least ORC1, ORC2, ORC3, ORC4, ORC5 and ORC6. ORC is regulated in a cell-cycle and development dependent manner. It is sequentially assembled at the exit from anaphase of mitosis and disassembled as cells enter S phase.

The protein localises to the nucleus. Functionally, essential protein. Component of the origin recognition complex (ORC) that binds origins of replication. DNA-binding is ATP-dependent, however specific DNA sequences that define origins of replication have not been identified so far. ORC is required to assemble the pre-replication complex necessary to initiate DNA replication. This chain is Origin of replication complex subunit 2, found in Oryza sativa subsp. indica (Rice).